Here is a 390-residue protein sequence, read N- to C-terminus: tRNA-specific 2-thiouridylase MnmA (390 aa).

ATP is bound by residues 29-36 (GLSGGVDS) and leucine 55. Catalysis depends on cysteine 116, which acts as the Nucleophile. Residues cysteine 116 and cysteine 225 are joined by a disulfide bond. Glycine 141 contacts ATP. The segment at 175–177 (KDQ) is interaction with tRNA. Cysteine 225 serves as the catalytic Cysteine persulfide intermediate. Positions 330-331 (RY) are interaction with tRNA.

Belongs to the MnmA/TRMU family.

Its subcellular location is the cytoplasm. The catalysed reaction is S-sulfanyl-L-cysteinyl-[protein] + uridine(34) in tRNA + AH2 + ATP = 2-thiouridine(34) in tRNA + L-cysteinyl-[protein] + A + AMP + diphosphate + H(+). Catalyzes the 2-thiolation of uridine at the wobble position (U34) of tRNA, leading to the formation of s(2)U34. This chain is tRNA-specific 2-thiouridylase MnmA, found in Prochlorococcus marinus (strain MIT 9515).